The primary structure comprises 100 residues: Integration host factor subunit alpha (100 aa).

It belongs to the bacterial histone-like protein family. In terms of assembly, heterodimer of an alpha and a beta chain.

Functionally, this protein is one of the two subunits of integration host factor, a specific DNA-binding protein that functions in genetic recombination as well as in transcriptional and translational control. This Ruegeria pomeroyi (strain ATCC 700808 / DSM 15171 / DSS-3) (Silicibacter pomeroyi) protein is Integration host factor subunit alpha.